Reading from the N-terminus, the 77-residue chain is Apelin (77 aa).

Positions 1 to 22 (MNLRRCVQALLLLWLCLSAVCG) are cleaved as a signal peptide. A propeptide spanning residues 23-41 (GPLLQTSDGKEMEEGTIRY) is cleaved from the precursor. The tract at residues 43-77 (VQPRGPRSGPGPWQGGRRKFRRQRPRLSHKGPMPF) is disordered. Over residues 58-71 (GRRKFRRQRPRLSH) the composition is skewed to basic residues. Position 65 is a pyrrolidone carboxylic acid (Gln65).

This sequence belongs to the apelin family. At least 5 active peptides may be produced by proteolytic processing of the peptide precursor.

It localises to the secreted. It is found in the extracellular space. Its function is as follows. Peptide hormone that functions as endogenous ligand for the G-protein-coupled apelin receptor (APLNR/APJ), that plays a role in cadiovascular homeostasis. Functions as a balanced agonist activating both G(i) protein pathway and beta-arrestin pathway of APLNR. Downstream G proteins activation, apelin can inhibit cAMP production and activate key intracellular effectors such as ERKs. On the other hand, APLNR activation induces beta-arrestin recruitment to the membrane leading to desensitization and internalization of the receptor. Apelin blunts cardiac hypertrophic induction from APLNR on response to pathological stimuli, but also induces myocardial hypertrophy under normal conditions. Apelin-36 dissociates more hardly than (pyroglu)apelin-13 from APLNR. Involved in the regulation of cardiac precursor cell movements during gastrulation and heart morphogenesis. Has an inhibitory effect on cytokine production in response to T-cell receptor/CD3 cross-linking; the oral intake of apelin in the colostrum and the milk might therefore modulate immune responses in neonates. Plays a role in early coronary blood vessels formation. Mediates myocardial contractility in an ERK1/2-dependent manner. May also have a role in the central control of body fluid homeostasis by influencing vasopressin release and drinking behavior. The chain is Apelin (APLN) from Bos taurus (Bovine).